A 175-amino-acid chain; its full sequence is Co-chaperone protein HscB homolog (175 aa).

Residues 7-79 form the J domain; that stretch reads SHFDLFDLPA…LKRATYLLHL (73 aa).

The protein belongs to the HscB family. Interacts with HscA and stimulates its ATPase activity.

Functionally, co-chaperone involved in the maturation of iron-sulfur cluster-containing proteins. Seems to help targeting proteins to be folded toward HscA. The sequence is that of Co-chaperone protein HscB homolog from Paraburkholderia phytofirmans (strain DSM 17436 / LMG 22146 / PsJN) (Burkholderia phytofirmans).